Consider the following 378-residue polypeptide: Flap endonuclease 1 (378 aa).

The N-domain stretch occupies residues 1–104 (MGVKDLSKVI…SELEKRTERR (104 aa)). Residue Asp34 coordinates Mg(2+). Residues Arg47 and Arg70 each contribute to the DNA site. Residue Asp86 coordinates Mg(2+). A disordered region spans residues 90-113 (PQMKTSELEKRTERRTEAEKQRND). Positions 95-113 (SELEKRTERRTEAEKQRND) are enriched in basic and acidic residues. Residues 122–253 (SVNKFEKRLV…KKAFELIKKY (132 aa)) form an I-domain region. Positions 158, 160, 179, and 181 each coordinate Mg(2+). Glu158 serves as a coordination point for DNA. Positions 231 and 233 each coordinate DNA. Residue Asp233 coordinates Mg(2+). Positions 336–344 (QQARIDSFF) are interaction with PCNA. The tract at residues 348–378 (KVVTSETTKRKNEEKNNLKKRGPSLGKKAKK) is disordered. Basic and acidic residues predominate over residues 354–364 (TTKRKNEEKNN). Basic residues predominate over residues 365–378 (LKKRGPSLGKKAKK).

It belongs to the XPG/RAD2 endonuclease family. FEN1 subfamily. Interacts with PCNA. Three molecules of FEN1 bind to one PCNA trimer with each molecule binding to one PCNA monomer. PCNA stimulates the nuclease activity without altering cleavage specificity. It depends on Mg(2+) as a cofactor. Phosphorylated. Phosphorylation upon DNA damage induces relocalization to the nuclear plasma.

The protein resides in the nucleus. Its subcellular location is the nucleolus. It is found in the nucleoplasm. The protein localises to the mitochondrion. Functionally, structure-specific nuclease with 5'-flap endonuclease and 5'-3' exonuclease activities involved in DNA replication and repair. During DNA replication, cleaves the 5'-overhanging flap structure that is generated by displacement synthesis when DNA polymerase encounters the 5'-end of a downstream Okazaki fragment. It enters the flap from the 5'-end and then tracks to cleave the flap base, leaving a nick for ligation. Also involved in the long patch base excision repair (LP-BER) pathway, by cleaving within the apurinic/apyrimidinic (AP) site-terminated flap. Acts as a genome stabilization factor that prevents flaps from equilibrating into structures that lead to duplications and deletions. Also possesses 5'-3' exonuclease activity on nicked or gapped double-stranded DNA, and exhibits RNase H activity. Also involved in replication and repair of rDNA and in repairing mitochondrial DNA. The protein is Flap endonuclease 1 of Brugia malayi (Filarial nematode worm).